Here is a 267-residue protein sequence, read N- to C-terminus: Trehalose 2-sulfotransferase (267 aa).

Residues Gln-14, 33–39 (EPQEFFQ), Pro-48, and Trp-53 contribute to the alpha,alpha-trehalose site. The active-site Proton acceptor is the Glu-36.

This sequence belongs to the Stf0 sulfotransferase family. In terms of assembly, homodimer.

The enzyme catalyses alpha,alpha-trehalose + 3'-phosphoadenylyl sulfate = 2-O-sulfo-alpha,alpha-trehalose + adenosine 3',5'-bisphosphate + H(+). It functions in the pathway glycolipid metabolism. Its function is as follows. Catalyzes the sulfuryl group transfer from 3'-phosphoadenosine-5'-phosphosulfate (PAPS) to trehalose, leading to trehalose-2-sulfate (T2S). The sulfation of trehalose is the first step in the biosynthesis of sulfolipid-1 (SL-1), a major cell wall glycolipid and the most abundant sulfated metabolite found in Mycobacterium tuberculosis, that is a potential virulence factor thought to mediate host-pathogen interactions. The sequence is that of Trehalose 2-sulfotransferase from Mycobacterium tuberculosis (strain ATCC 35801 / TMC 107 / Erdman).